We begin with the raw amino-acid sequence, 152 residues long: Antiholin-like protein LrgA (152 aa).

A run of 4 helical transmembrane segments spans residues Tyr23 to Glu43, Phe45 to Cys65, Val77 to Ile97, and Ile108 to Ser128.

This sequence belongs to the CidA/LrgA family. LrgA subfamily.

It localises to the cell membrane. In terms of biological role, inhibits the expression or activity of extracellular murein hydrolases by interacting, possibly with LrgB, with the holin-like proteins CidA and/or CidB. The LrgAB and CidAB proteins may affect the proton motive force of the membrane. May be involved in programmed cell death (PCD), possibly triggering PCD in response to antibiotics and environmental stresses. This Staphylococcus epidermidis (strain ATCC 12228 / FDA PCI 1200) protein is Antiholin-like protein LrgA.